The following is a 304-amino-acid chain: Probable actin-related protein 2/3 complex subunit 2 (304 aa).

The protein belongs to the ARPC2 family. In terms of assembly, component of the Arp2/3 complex.

It localises to the cytoplasm. The protein resides in the cytoskeleton. In terms of biological role, functions as actin-binding component of the Arp2/3 complex which is involved in regulation of actin polymerization and together with an activating nucleation-promoting factor (NPF) mediates the formation of branched actin networks. Seems to contact the mother actin filament. In Anopheles gambiae (African malaria mosquito), this protein is Probable actin-related protein 2/3 complex subunit 2 (Arc-p34).